Here is a 204-residue protein sequence, read N- to C-terminus: Probable carboxysome shell protein CsoS1E (204 aa).

3 stretches are compositionally biased toward low complexity: residues 1 to 14 (MPKP…DSPS), 41 to 84 (SAST…AAGS), and 92 to 102 (GGAIKPPASSS). Positions 1–102 (MPKPSSSSSS…GAIKPPASSS (102 aa)) are disordered. In terms of domain architecture, BMC spans 111 to 196 (ALGMIETRGM…PHQEVEPALR (86 aa)).

This sequence belongs to the bacterial microcompartments protein family. In terms of assembly, homohexamer.

The protein resides in the carboxysome. Functionally, a probable carboxysomal shell protein found only in Prochlorococcus and Synechococcus strains that grow in low light. The chain is Probable carboxysome shell protein CsoS1E from Prochlorococcus marinus (strain MIT 9313).